Consider the following 537-residue polypeptide: Lysosomal cobalamin transport escort protein LMBD1 (537 aa).

Residues 1–7 (MAAAAAE) lie on the Extracellular side of the membrane. Residues 8 to 28 (LVIGWCIFGLLLLAILAFCWV) form a helical membrane-spanning segment. Residues 29–47 (YVRKYQSQRESEVVSTVTA) lie on the Cytoplasmic side of the membrane. A helical transmembrane segment spans residues 48 to 68 (IFSLAVALITSALLPVDIFLV). The Extracellular portion of the chain corresponds to 69–97 (SYMKNQNGTFKDWADANVTVQIENTVLYG). Asparagine 75 and asparagine 85 each carry an N-linked (GlcNAc...) asparagine glycan. Residues 98–118 (YYTLYSVILFCVFFWIPFVYF) traverse the membrane as a helical segment. At 119–141 (YYEEKDEDDASKCTQIKTALKYT) the chain is on the cytoplasmic side. The chain crosses the membrane as a helical span at residues 142–162 (LGFVVICALLLLVGAFVPLHL). Residues 163–185 (PNNNNSTEWEKVKLLFEDLGTGQ) are Extracellular-facing. Residues asparagine 166 and asparagine 167 are each glycosylated (N-linked (GlcNAc...) asparagine). Residues 186–206 (GLAALSFSISSLTLIGMLAAI) form a helical membrane-spanning segment. Over 207 to 302 (TYTAYGMSAL…KFCGALRPLK (96 aa)) the chain is Cytoplasmic. The short motif at 229 to 232 (YERL) is the YERL motif; mediates interaction with adapter protein complex 2 and is essential for its function in clathrin-mediated endocytosis of INSR element. Threonine 235 is modified (phosphothreonine). The short motif at 291 to 294 (WTKF) is the WTKF motif; mediates interaction with adapter protein complex 2 and is essential for its function in clathrin-mediated endocytosis of INSR element. Residues 303–323 (IIWGIFFILVALLFVISLFLS) traverse the membrane as a helical segment. Residues 324-361 (NLDKALHSAGIDSGFIIFGTNLSNPLNMLLPLLQTVFP) are Extracellular-facing. The N-linked (GlcNAc...) asparagine glycan is linked to asparagine 344. A helical membrane pass occupies residues 362–382 (LDYILITIIIMYFIFTSMAGI). Over 383-405 (RNIGIWFFWIRLYKIRRGRTRPQ) the chain is Cytoplasmic. A helical transmembrane segment spans residues 406 to 426 (ALLFLCMILLLIVLHTSYMIY). Residues 427–483 (SLAPQYVMYGSQNYLIESNITSDAHKGNSTLAVPKRCDADAPKDQCTVTRTYIFLHK) lie on the Extracellular side of the membrane. 2 N-linked (GlcNAc...) asparagine glycosylation sites follow: asparagine 445 and asparagine 454. Residues 484 to 504 (FWFFSAAYYFGNWAFLVVFLI) form a helical membrane-spanning segment. The Cytoplasmic segment spans residues 505 to 537 (GLIVSCCKGKKSVIEGVDEDSDLSDDEPSAYSA). Phosphoserine is present on residues serine 525 and serine 528.

It belongs to the LIMR family. LMBRD1 subfamily. As to quaternary structure, interacts with ABCD4; this interaction induces the translocation of ABCD4 from the endoplasmic reticulum to the lysosome. Interacts with ABCD4 and MMACHC; this interaction ensures the transport of cobalamin from the lysosome to the cytoplasm. Interacts with INSR, adapter protein complex 2 and clathrin heavy chain. Post-translationally, N-glycosylated.

It localises to the endoplasmic reticulum membrane. The protein localises to the lysosome membrane. Its subcellular location is the cell membrane. It is found in the cytoplasmic vesicle. The protein resides in the clathrin-coated vesicle. Its function is as follows. Lysosomal membrane chaperone required to export cobalamin (vitamin B12) from the lysosome to the cytosol, allowing its conversion to cofactors. Targets ABCD4 transporter from the endoplasmic reticulum to the lysosome. Then forms a complex with lysosomal ABCD4 and cytoplasmic MMACHC to transport cobalamin across the lysosomal membrane. Acts as an adapter protein which plays an important role in mediating and regulating the internalization of the insulin receptor (INSR). Involved in clathrin-mediated endocytosis of INSR via its interaction with adapter protein complex 2. Essential for the initiation of gastrulation and early formation of mesoderm structures during embryogenesis. The chain is Lysosomal cobalamin transport escort protein LMBD1 from Mus musculus (Mouse).